The following is a 538-amino-acid chain: Putative cysteine ligase BshC (538 aa).

Residues lysine 460–leucine 484 adopt a coiled-coil conformation.

Belongs to the BshC family.

Involved in bacillithiol (BSH) biosynthesis. May catalyze the last step of the pathway, the addition of cysteine to glucosamine malate (GlcN-Mal) to generate BSH. In Bacillus cereus (strain AH820), this protein is Putative cysteine ligase BshC.